Here is a 241-residue protein sequence, read N- to C-terminus: Phosphoadenosine 5'-phosphosulfate reductase (241 aa).

Cysteine 235 acts as the Nucleophile; cysteine thiosulfonate intermediate in catalysis.

This sequence belongs to the PAPS reductase family. CysH subfamily.

It localises to the cytoplasm. The enzyme catalyses [thioredoxin]-disulfide + sulfite + adenosine 3',5'-bisphosphate + 2 H(+) = [thioredoxin]-dithiol + 3'-phosphoadenylyl sulfate. It functions in the pathway sulfur metabolism; hydrogen sulfide biosynthesis; sulfite from sulfate: step 3/3. Its function is as follows. Catalyzes the formation of sulfite from phosphoadenosine 5'-phosphosulfate (PAPS) using thioredoxin as an electron donor. In Xanthomonas euvesicatoria pv. vesicatoria (strain 85-10) (Xanthomonas campestris pv. vesicatoria), this protein is Phosphoadenosine 5'-phosphosulfate reductase.